A 433-amino-acid chain; its full sequence is uncharacterized protein (433 aa).

Transmembrane regions (helical) follow at residues 28-48 (FAAL…SHII), 56-76 (IYGW…YPFF), 102-122 (IWIF…AVGL), 126-146 (AILT…FIVI), 164-184 (LSKL…IIAL), 207-227 (ALGF…ISAI), 250-270 (FNVG…LGAL), 304-324 (GLIA…VIDG), 345-365 (SYLN…IFYF), 375-395 (FAMI…LSLV), and 406-426 (LLWL…LFIA).

The protein resides in the cell membrane. This is an uncharacterized protein from Pasteurella multocida (strain Pm70).